A 594-amino-acid polypeptide reads, in one-letter code: Acyl-coenzyme A thioesterase 11 (594 aa).

The N-terminal 20 residues, 1-20 (MIQNVGNHLRRGFASMFSNR), are a transit peptide targeting the mitochondrion. 2 positions are modified to phosphoserine: Ser-15 and Ser-25. A disordered region spans residues 20 to 43 (RTSRKSISHPESGDPPTMAEGEGY). One can recognise a HotDog ACOT-type 1 domain in the interval 45–157 (NPTEVQMSQL…LATFVAHREL (113 aa)). Residues 93-95 (TAS), 122-124 (NSS), Arg-183, and 272-274 (HFR) each bind CoA. The region spanning 217–330 (EKTRVESVEL…FMTFVVLDKD (114 aa)) is the HotDog ACOT-type 2 domain. The region spanning 370–582 (KQAEVALSVP…FKACESFLLD (213 aa)) is the START domain.

The protein resides in the mitochondrion matrix. It localises to the cytoplasm. It catalyses the reaction hexadecanoyl-CoA + H2O = hexadecanoate + CoA + H(+). The enzyme catalyses tetradecanoyl-CoA + H2O = tetradecanoate + CoA + H(+). It carries out the reaction dodecanoyl-CoA + H2O = dodecanoate + CoA + H(+). The catalysed reaction is butanoyl-CoA + H2O = butanoate + CoA + H(+). Its pathway is lipid metabolism; fatty acid metabolism. In terms of biological role, has an acyl-CoA thioesterase activity with a preference for the long chain fatty acyl-CoA thioesters hexadecanoyl-CoA/palmitoyl-CoA and tetradecanoyl-CoA/myristoyl-CoA which are the main substrates in the mitochondrial beta-oxidation pathway. The chain is Acyl-coenzyme A thioesterase 11 (Acot11) from Mus musculus (Mouse).